We begin with the raw amino-acid sequence, 1309 residues long: Lysine-specific demethylase 2B (1309 aa).

At S26 the chain carries Phosphoserine. Residues 147 to 315 (FSHTKLEHLV…MQLRIYEIED (169 aa)) enclose the JmjC domain. Residue T208 participates in substrate binding. Fe cation contacts are provided by H211 and D213. K228 contacts substrate. Residue H283 coordinates Fe cation. The segment covering 378–403 (DMEEESCEQQPQEEEEEEEDKEEEGD) has biased composition (acidic residues). Positions 378 to 476 (DMEEESCEQQ…PTGSPATEVS (99 aa)) are disordered. Over residues 404–413 (GADKTPKPPT) the composition is skewed to basic and acidic residues. A compositionally biased stretch (low complexity) spans 415–424 (DPTSPTSTPP). S447 and S450 each carry phosphoserine. T466 is subject to Phosphothreonine. A compositionally biased stretch (polar residues) spans 467–476 (PTGSPATEVS). The residue at position 470 (S470) is a Phosphoserine. A CXXC-type zinc finger spans residues 579 to 625 (ARRRRTRCRKCEACLRTECGECHFCKDMKKFGGPGRMKQSCIMRQCI). Positions 586, 589, 592, 597, 600, 603, 619, 624, 635, 638, 661, 664, 669, 672, 692, and 695 each coordinate Zn(2+). Residues 632–698 (TAVCLVCGEA…CWECPKCNHA (67 aa)) form a PHD-type zinc finger. Disordered stretches follow at residues 700 to 816 (KTGK…SLSP) and 828 to 1005 (QLKP…SASP). Residues 722-772 (KEQKMNRDNKEGQEPAKRRSECEEAPRRRSDEHPKKVPADGILRRKSDDVH) show a composition bias toward basic and acidic residues. Low complexity predominate over residues 792–816 (SSLQTSPGSSSHLSPRPPLGSSLSP). Glycyl lysine isopeptide (Lys-Gly) (interchain with G-Cter in SUMO2) cross-links involve residues K830 and K863. The segment covering 883–892 (SRSSSPTAGP) has biased composition (polar residues). The span at 905 to 914 (KVKMRRKRRL) shows a compositional bias: basic residues. A compositionally biased stretch (basic and acidic residues) spans 915-933 (VNKELSKELSKELNHEIQK). Positions 916–944 (NKELSKELSKELNHEIQKTESTLAHESQQ) form a coiled coil. S924 is modified (phosphoserine). Polar residues predominate over residues 934–946 (TESTLAHESQQPI). Residues S948 and S952 each carry the phosphoserine modification. Basic and acidic residues predominate over residues 955–968 (DEPKRPLSHCERPH). A phosphoserine mark is found at S991 and S1004. Positions 1032-1078 (DGAAHVMHREVWMAVFSYLSHRDLCVCMRVCRTWNRWCCDKRLWTRI) constitute an F-box domain. 6 LRR repeats span residues 1106–1127 (WTNI…LRDL), 1129–1155 (LSGC…DVQW), 1195–1220 (GLDI…QLSY), 1221–1250 (CNHI…NLSD), 1251–1275 (CNKV…DLRY), and 1276–1309 (CKQV…QKLS).

Belongs to the JHDM1 histone demethylase family. As to quaternary structure, interacts with SKP1, forming heterodimers. The KDM2B-SKP1 heterodimeric complex interacts with the PCGF1-BCORL heterodimeric complex to form a homotetrameric polycomb repression complex 1 (PRC1.1). Directly interacts with CUL1. The SKP1-KDM2B interacts with UBB. The cofactor is Fe(2+).

It localises to the nucleus. The protein localises to the nucleolus. The protein resides in the chromosome. The catalysed reaction is N(6),N(6)-dimethyl-L-lysyl(36)-[histone H3] + 2 2-oxoglutarate + 2 O2 = L-lysyl(36)-[histone H3] + 2 formaldehyde + 2 succinate + 2 CO2. Its activity is regulated as follows. Histone demethylase activity is inhibited by fumarate. Functionally, histone demethylase that demethylates 'Lys-4' and 'Lys-36' of histone H3, thereby playing a central role in histone code. Preferentially demethylates trimethylated H3 'Lys-4' and dimethylated H3 'Lys-36' residue while it has weak or no activity for mono- and tri-methylated H3 'Lys-36'. Preferentially binds the transcribed region of ribosomal RNA and represses the transcription of ribosomal RNA genes which inhibits cell growth and proliferation. May also serve as a substrate-recognition component of the SCF (SKP1-CUL1-F-box protein)-type E3 ubiquitin ligase complex. In Mus musculus (Mouse), this protein is Lysine-specific demethylase 2B (Kdm2b).